Here is a 94-residue protein sequence, read N- to C-terminus: Cytochrome c-551 (94 aa).

The first 14 residues, 1 to 14, serve as a signal peptide directing secretion; that stretch reads MAFTAMTVAPSALA. 4 residues coordinate heme c: Cys-24, Cys-27, His-28, and Met-73.

Binds 1 heme c group covalently per subunit.

Functionally, efficiently couple electron transfer between the cytochrome bc1 complex and the photosynthetic reaction center. In Allochromatium vinosum (strain ATCC 17899 / DSM 180 / NBRC 103801 / NCIMB 10441 / D) (Chromatium vinosum), this protein is Cytochrome c-551.